We begin with the raw amino-acid sequence, 294 residues long: Probable 2-(5''-triphosphoribosyl)-3'-dephosphocoenzyme-A synthase (294 aa).

It belongs to the CitG/MdcB family.

The enzyme catalyses 3'-dephospho-CoA + ATP = 2'-(5''-triphospho-alpha-D-ribosyl)-3'-dephospho-CoA + adenine. The protein is Probable 2-(5''-triphosphoribosyl)-3'-dephosphocoenzyme-A synthase of Streptococcus pyogenes serotype M2 (strain MGAS10270).